Here is a 622-residue protein sequence, read N- to C-terminus: Low affinity potassium transport system protein Kup (622 aa).

A run of 12 helical transmembrane segments spans residues 9 to 29, 49 to 69, 103 to 123, 137 to 157, 165 to 185, 213 to 233, 247 to 267, 276 to 296, 337 to 357, 363 to 383, 396 to 416, and 419 to 439; these read LPAITLAAIGVVYGDIGTSPL, VFGFLSLIFWLLIFVVSIKYL, VIMGLIGGSFFYGEVVITPAI, PQLDTWIVPLSIIVLTLLFMI, VGKLFAPIMLTWFLILAGLGL, VSFIALGAVVLSITGGEALYA, WFTVVLPSLTLNYFGQGALLL, PFFLLAPDWALIPLLIIAALA, IYIPFVNWMLYVAVVIVIVSF, LAAAYGIAVTGTMVLTSILST, FVALILIAFLCVDIPLFTANL, and LLSGGWLPLSLGTVMFIVMTT.

It belongs to the HAK/KUP transporter (TC 2.A.72) family.

It localises to the cell inner membrane. The catalysed reaction is K(+)(in) + H(+)(in) = K(+)(out) + H(+)(out). Functionally, responsible for the low-affinity transport of potassium into the cell. Likely operates as a K(+):H(+) symporter. In Shigella flexneri serotype 5b (strain 8401), this protein is Low affinity potassium transport system protein Kup.